A 276-amino-acid polypeptide reads, in one-letter code: NADPH-dependent 7-cyano-7-deazaguanine reductase (276 aa).

Residue 83–85 (IES) coordinates substrate. Residue 85-86 (SK) participates in NADPH binding. Cysteine 184 serves as the catalytic Thioimide intermediate. Aspartate 191 serves as the catalytic Proton donor. 223 to 224 (HE) serves as a coordination point for substrate. 252–253 (RG) lines the NADPH pocket.

The protein belongs to the GTP cyclohydrolase I family. QueF type 2 subfamily. In terms of assembly, homodimer.

It localises to the cytoplasm. The enzyme catalyses 7-aminomethyl-7-carbaguanine + 2 NADP(+) = 7-cyano-7-deazaguanine + 2 NADPH + 3 H(+). It functions in the pathway tRNA modification; tRNA-queuosine biosynthesis. Functionally, catalyzes the NADPH-dependent reduction of 7-cyano-7-deazaguanine (preQ0) to 7-aminomethyl-7-deazaguanine (preQ1). The polypeptide is NADPH-dependent 7-cyano-7-deazaguanine reductase (Pseudomonas syringae pv. tomato (strain ATCC BAA-871 / DC3000)).